A 355-amino-acid chain; its full sequence is Syntaxin-5 (355 aa).

At 1–333 (MIPRKRYGSK…KYFQSVTSNR (333 aa)) the chain is on the cytoplasmic side. Polar residues predominate over residues 28-37 (PATAGSSSSD). The disordered stretch occupies residues 28–47 (PATAGSSSSDIAPLPPPVAL). The IxM motif; signal for cargo packaging into COPII-coated vesicles motif lies at 245 to 247 (IDM). In terms of domain architecture, t-SNARE coiled-coil homology spans 263-325 (DSYIQSRADT…EAAHSEILKY (63 aa)). Positions 287–318 (FQQLAHMVKEQEETIQRIDENVLGAQLDVEAA) form a coiled coil. A helical; Anchor for type IV membrane protein transmembrane segment spans residues 334–354 (WLMVKIFLILIVFFIIFVVFL). A topological domain (vesicular) is located at residue Ala355.

Belongs to the syntaxin family. In terms of assembly, part of a ternary complex containing STX5A, NSFL1C and VCP. Part of a unique SNARE complex composed of the Golgi SNAREs GOSR1, GOSR2 and YKT6. This complex also includes VTI1A. Component of a SNARE complex consisting of STX5, YKT6, GOSR1 and BET1L. Interacts with BET1L. Interacts with BET1. Interacts with COG4. Interacts with GM130/GOLGA2. Interacts (via IxM motif) with SEC24C and SEC24D; mediates STX5 packaging into COPII-coated vesicles. Interacts with VLDLR; this interaction mediates VLDLR translocation from the endoplasmic reticulum to the plasma membrane.

It localises to the endoplasmic reticulum-Golgi intermediate compartment membrane. Its subcellular location is the golgi apparatus membrane. In terms of biological role, mediates endoplasmic reticulum to Golgi transport. Together with p115/USO1 and GM130/GOLGA2, involved in vesicle tethering and fusion at the cis-Golgi membrane to maintain the stacked and inter-connected structure of the Golgi apparatus. In Bos taurus (Bovine), this protein is Syntaxin-5 (STX5).